The sequence spans 99 residues: Integration host factor subunit alpha (99 aa).

The disordered stretch occupies residues 49–72 (FGNFDLRDKNQRPGRNPKTGEDIP).

Belongs to the bacterial histone-like protein family. In terms of assembly, heterodimer of an alpha and a beta chain.

Its function is as follows. This protein is one of the two subunits of integration host factor, a specific DNA-binding protein that functions in genetic recombination as well as in transcriptional and translational control. The sequence is that of Integration host factor subunit alpha from Escherichia coli O9:H4 (strain HS).